Reading from the N-terminus, the 343-residue chain is DNA-directed RNA polymerase subunit alpha (343 aa).

The interval 1–243 (MTQEIDEKIP…EQLDIFINFD (243 aa)) is alpha N-terminal domain (alpha-NTD). The interval 261–343 (ENPYLDKPVE…NAPSDAETEE (83 aa)) is alpha C-terminal domain (alpha-CTD).

The protein belongs to the RNA polymerase alpha chain family. Homodimer. The RNAP catalytic core consists of 2 alpha, 1 beta, 1 beta' and 1 omega subunit. When a sigma factor is associated with the core the holoenzyme is formed, which can initiate transcription.

The enzyme catalyses RNA(n) + a ribonucleoside 5'-triphosphate = RNA(n+1) + diphosphate. Its function is as follows. DNA-dependent RNA polymerase catalyzes the transcription of DNA into RNA using the four ribonucleoside triphosphates as substrates. In Desulfotalea psychrophila (strain LSv54 / DSM 12343), this protein is DNA-directed RNA polymerase subunit alpha.